The sequence spans 368 residues: 7,8-didemethyl-8-hydroxy-5-deazariboflavin synthase (368 aa).

The 237-residue stretch at 36–272 (LSYCRNVFLP…EEVSVQVPPN (237 aa)) folds into the Radical SAM core domain. Residues Cys-50, Cys-54, and Cys-57 each contribute to the [4Fe-4S] cluster site.

The protein belongs to the radical SAM superfamily. CofG family. Consists of two subunits, CofG and CofH. Requires [4Fe-4S] cluster as cofactor.

The catalysed reaction is 5-amino-5-(4-hydroxybenzyl)-6-(D-ribitylimino)-5,6-dihydrouracil + S-adenosyl-L-methionine = 7,8-didemethyl-8-hydroxy-5-deazariboflavin + 5'-deoxyadenosine + L-methionine + NH4(+) + H(+). It participates in cofactor biosynthesis; coenzyme F0 biosynthesis. In terms of biological role, catalyzes the radical-mediated synthesis of 7,8-didemethyl-8-hydroxy-5-deazariboflavin from 5-amino-5-(4-hydroxybenzyl)-6-(D-ribitylimino)-5,6-dihydrouracil. This Haloarcula marismortui (strain ATCC 43049 / DSM 3752 / JCM 8966 / VKM B-1809) (Halobacterium marismortui) protein is 7,8-didemethyl-8-hydroxy-5-deazariboflavin synthase.